The primary structure comprises 1226 residues: Methionine synthase (1226 aa).

The Hcy-binding domain maps to Arg-6–Val-326. Cys-248, Cys-311, and Cys-312 together coordinate Zn(2+). The 262-residue stretch at Phe-357–Glu-618 folds into the Pterin-binding domain. The region spanning Ser-651–Ser-745 is the B12-binding N-terminal domain. Methylcob(III)alamin contacts are provided by residues Glu-695, Gly-757–Asp-761, His-760, Ser-805, Thr-809, and Ala-861. A B12-binding domain is found at Asn-747–Glu-882. One can recognise an AdoMet activation domain in the interval Lys-898–Gly-1226. S-adenosyl-L-methionine-binding positions include Asp-948, Arg-1136, and Tyr-1191 to Phe-1192.

Belongs to the vitamin-B12 dependent methionine synthase family. Requires methylcob(III)alamin as cofactor. It depends on Zn(2+) as a cofactor.

The enzyme catalyses (6S)-5-methyl-5,6,7,8-tetrahydrofolate + L-homocysteine = (6S)-5,6,7,8-tetrahydrofolate + L-methionine. The protein operates within amino-acid biosynthesis; L-methionine biosynthesis via de novo pathway; L-methionine from L-homocysteine (MetH route): step 1/1. In terms of biological role, catalyzes the transfer of a methyl group from methyl-cobalamin to homocysteine, yielding enzyme-bound cob(I)alamin and methionine. Subsequently, remethylates the cofactor using methyltetrahydrofolate. This Vibrio vulnificus (strain YJ016) protein is Methionine synthase (metH).